A 423-amino-acid polypeptide reads, in one-letter code: NADH-quinone oxidoreductase subunit F (423 aa).

NAD(+) is bound at residue 54–63 (GRGGAGFSTG). 166-213 (GAGAYICGEETALLESLEGKKGMPRLKPPFPAGFGLYGCPTTINNVES) lines the FMN pocket. [4Fe-4S] cluster-binding residues include C344, C347, C350, and C390.

This sequence belongs to the complex I 51 kDa subunit family. The cofactor is FMN. [4Fe-4S] cluster serves as cofactor.

It carries out the reaction a quinone + NADH + 5 H(+)(in) = a quinol + NAD(+) + 4 H(+)(out). Functionally, NDH-1 shuttles electrons from NADH, via FMN and iron-sulfur (Fe-S) centers, to quinones in the respiratory chain. Couples the redox reaction to proton translocation (for every two electrons transferred, four hydrogen ions are translocated across the cytoplasmic membrane), and thus conserves the redox energy in a proton gradient. The chain is NADH-quinone oxidoreductase subunit F (nuoF) from Rickettsia akari (strain Hartford).